A 249-amino-acid polypeptide reads, in one-letter code: 23S rRNA (guanosine-2'-O-)-methyltransferase RlmB (249 aa).

The S-adenosyl-L-methionine site is built by G200, I220, and L229.

This sequence belongs to the class IV-like SAM-binding methyltransferase superfamily. RNA methyltransferase TrmH family. RlmB subfamily.

The protein localises to the cytoplasm. The enzyme catalyses guanosine(2251) in 23S rRNA + S-adenosyl-L-methionine = 2'-O-methylguanosine(2251) in 23S rRNA + S-adenosyl-L-homocysteine + H(+). Its function is as follows. Specifically methylates the ribose of guanosine 2251 in 23S rRNA. The protein is 23S rRNA (guanosine-2'-O-)-methyltransferase RlmB of Xanthomonas campestris pv. campestris (strain ATCC 33913 / DSM 3586 / NCPPB 528 / LMG 568 / P 25).